We begin with the raw amino-acid sequence, 212 residues long: 2-C-methyl-D-erythritol 4-phosphate cytidylyltransferase (212 aa).

It belongs to the IspD/TarI cytidylyltransferase family. IspD subfamily.

It carries out the reaction 2-C-methyl-D-erythritol 4-phosphate + CTP + H(+) = 4-CDP-2-C-methyl-D-erythritol + diphosphate. The protein operates within isoprenoid biosynthesis; isopentenyl diphosphate biosynthesis via DXP pathway; isopentenyl diphosphate from 1-deoxy-D-xylulose 5-phosphate: step 2/6. Functionally, catalyzes the formation of 4-diphosphocytidyl-2-C-methyl-D-erythritol from CTP and 2-C-methyl-D-erythritol 4-phosphate (MEP). The sequence is that of 2-C-methyl-D-erythritol 4-phosphate cytidylyltransferase from Chlamydia felis (strain Fe/C-56) (Chlamydophila felis).